A 184-amino-acid polypeptide reads, in one-letter code: MEISGSIQASLGGRYALALFEVAQEKGQIDTVAASLGKFDEAFAQARELRLLANNQIFSRKHVEKAIAALVPVLAIDDLTAKFLNLLAAKGRLGAFPEIASAYRQYVADLRSEKVADVITAHPLSDEQKSTLTARLKEQLKADVQINATVDPSILGGMIVRLGSRQIDGSIRSKLHMLAQAMKG.

It belongs to the ATPase delta chain family. In terms of assembly, F-type ATPases have 2 components, F(1) - the catalytic core - and F(0) - the membrane proton channel. F(1) has five subunits: alpha(3), beta(3), gamma(1), delta(1), epsilon(1). F(0) has three main subunits: a(1), b(2) and c(10-14). The alpha and beta chains form an alternating ring which encloses part of the gamma chain. F(1) is attached to F(0) by a central stalk formed by the gamma and epsilon chains, while a peripheral stalk is formed by the delta and b chains.

The protein localises to the cell inner membrane. Functionally, f(1)F(0) ATP synthase produces ATP from ADP in the presence of a proton or sodium gradient. F-type ATPases consist of two structural domains, F(1) containing the extramembraneous catalytic core and F(0) containing the membrane proton channel, linked together by a central stalk and a peripheral stalk. During catalysis, ATP synthesis in the catalytic domain of F(1) is coupled via a rotary mechanism of the central stalk subunits to proton translocation. Its function is as follows. This protein is part of the stalk that links CF(0) to CF(1). It either transmits conformational changes from CF(0) to CF(1) or is implicated in proton conduction. This chain is ATP synthase subunit delta, found in Zymomonas mobilis subsp. mobilis (strain ATCC 31821 / ZM4 / CP4).